The primary structure comprises 284 residues: uncharacterized protein (284 aa).

An N-terminal signal peptide occupies residues 1-20 (MLHNIQSILQFLLFVSSVQA). The Apple domain maps to 38–121 (CFEFKKNYWI…FTVNFFRNIC (84 aa)). Cystine bridges form between Cys38-Cys121, Cys63-Cys89, and Cys67-Cys77. N-linked (GlcNAc...) asparagine glycosylation occurs at Asn256. The chain crosses the membrane as a helical span at residues 264-284 (SSTGLKFTTGLLIILVVFLFL).

It is found in the membrane. This is an uncharacterized protein from Caenorhabditis elegans.